The sequence spans 89 residues: Toxin To14 (89 aa).

A signal peptide spans 1 to 19 (MNCLMLIFVVFLLAFGVEC). Residues 21-85 (KDDYPVDTAK…SPTKTSGRCN (65 aa)) form the LCN-type CS-alpha/beta domain. 4 disulfides stabilise this stretch: C33/C84, C37/C60, C46/C67, and C50/C69.

As to expression, expressed by the venom gland.

Its subcellular location is the secreted. Functionally, inhibits voltage-gated sodium channels (Nav). In Tityus obscurus (Amazonian scorpion), this protein is Toxin To14.